A 183-amino-acid polypeptide reads, in one-letter code: Ankyrin repeat domain-containing protein 39 (183 aa).

ANK repeat units follow at residues 30 to 59, 63 to 92, 96 to 125, and 129 to 158; these read DFERGIWSAALNGDLGRVKYLIQKAVDPSQ, AGYTALHYASRNGHYAVCQFLLESGAKCDA, GGATALHRASYCGHTDIARLLLSHGSNPRL, and DGMTSLHKAAEKGHVDICSLLLQHSPALKA. A Phosphoserine modification is found at serine 153.

This sequence belongs to the ANKRD39 family.

This chain is Ankyrin repeat domain-containing protein 39 (ANKRD39), found in Bos taurus (Bovine).